The primary structure comprises 317 residues: L-lactate dehydrogenase (317 aa).

NAD(+)-binding positions include Val18, Asp39, Lys44, Tyr69, and 83 to 84 (GA). Substrate-binding positions include Gln86, Arg92, and 124–127 (NPVD). NAD(+) contacts are provided by residues 122–124 (VTN) and Ser147. 152-155 (DTAR) contacts substrate. 2 residues coordinate beta-D-fructose 1,6-bisphosphate: Arg157 and His172. His179 functions as the Proton acceptor in the catalytic mechanism. Position 225 is a phosphotyrosine (Tyr225). Thr234 contacts substrate.

It belongs to the LDH/MDH superfamily. LDH family. As to quaternary structure, homotetramer.

It localises to the cytoplasm. The enzyme catalyses (S)-lactate + NAD(+) = pyruvate + NADH + H(+). It functions in the pathway fermentation; pyruvate fermentation to lactate; (S)-lactate from pyruvate: step 1/1. With respect to regulation, allosterically activated by fructose 1,6-bisphosphate (FBP). Functionally, catalyzes the conversion of lactate to pyruvate. The protein is L-lactate dehydrogenase of Acetivibrio thermocellus (strain ATCC 27405 / DSM 1237 / JCM 9322 / NBRC 103400 / NCIMB 10682 / NRRL B-4536 / VPI 7372) (Clostridium thermocellum).